A 285-amino-acid chain; its full sequence is Complement C1q tumor necrosis factor-related protein 2 (285 aa).

A signal peptide spans 1–15; sequence MIPWVLLACALPCAA. The disordered stretch occupies residues 33-144; the sequence is QLVCSLPGPQ…PGLPGPCSCG (112 aa). The Collagen-like domain maps to 40–141; it reads GPQGPPGPPG…KGEPGLPGPC (102 aa). The span at 41-51 shows a compositional bias: pro residues; it reads PQGPPGPPGAP. Residues 53-65 are compositionally biased toward low complexity; the sequence is PSGMMGRMGFPGK. Positions 66–78 are enriched in basic and acidic residues; the sequence is DGQDGHDGDRGDS. Over residues 84-120 the composition is skewed to low complexity; the sequence is PGRTGNRGKPGPKGKAGAIGRAGPRGPKGVNGTPGKH. The region spanning 145–281 is the C1q domain; sequence SGHTKSAFSV…GFLIYADQDD (137 aa).

May interact with ERFE. As to expression, expressed in adipose tissue.

The protein localises to the secreted. In terms of biological role, involved in the regulation of lipid metabolism in adipose tissue and liver. The protein is Complement C1q tumor necrosis factor-related protein 2 (C1QTNF2) of Homo sapiens (Human).